A 544-amino-acid polypeptide reads, in one-letter code: 4-coumarate--CoA ligase 2 (544 aa).

Residues S190, S191, G192, T193, T194, and K198 each contribute to the ATP site. Y240 contributes to the (E)-4-coumaroyl-AMP binding site. K261 is a binding site for CoA. An SBD1 region spans residues 263–332; it reads DIVPFLELIQ…AKFPNAKLGQ (70 aa). (E)-4-coumaroyl-AMP is bound by residues A310, Q332, G333, T337, and M345. Residues Q332, G333, and T337 each contribute to the ATP site. The SBD2 stretch occupies residues 333–400; it reads GYGMTEAGPV…IRGDQIMKGY (68 aa). ATP-binding residues include D421 and R436. (E)-4-coumaroyl-AMP-binding residues include K438 and K442. Positions 444 and 445 each coordinate CoA. Residue K527 coordinates ATP.

It belongs to the ATP-dependent AMP-binding enzyme family. The cofactor is Mg(2+).

It carries out the reaction (E)-4-coumarate + ATP + CoA = (E)-4-coumaroyl-CoA + AMP + diphosphate. The catalysed reaction is (E)-4-coumarate + ATP + H(+) = (E)-4-coumaroyl-AMP + diphosphate. It catalyses the reaction (E)-4-coumaroyl-AMP + CoA = (E)-4-coumaroyl-CoA + AMP + H(+). The protein operates within phytoalexin biosynthesis; 3,4',5-trihydroxystilbene biosynthesis; 3,4',5-trihydroxystilbene from trans-4-coumarate: step 1/2. Functionally, carboxylate--CoA ligase that may use 4-coumarate as substrate. Follows a two-step reaction mechanism, wherein the carboxylate substrate first undergoes adenylation by ATP, followed by a thioesterification in the presence of CoA to yield the final CoA thioester. This is 4-coumarate--CoA ligase 2 (4CL2) from Petroselinum crispum (Parsley).